The primary structure comprises 184 residues: Tumor necrosis factor alpha-induced protein 8-like protein 2 (184 aa).

S3 is modified (phosphoserine).

It belongs to the TNFAIP8 family. TNFAIP8L2 subfamily. As to quaternary structure, may interact with CASP8; however, such result is unclear since could not reproduce the interaction with CASP8. Interacts with RAC1. In terms of processing, phosphorylated by TAK1/MAP3K7; this phosphorylation triggers association with BTRC and subsequent ubiquitination and degradation. Post-translationally, ubiquitinated in a BTRC-depdent manner; leading to degradation mediated through the proteasome pathway. As to expression, expressed in thymus, spleen, lymph node and small intestine, but not in liver, heart, muscle, testis, spinal cord or brain. Up-regulated in the spinal cord of mice with experimental autoimmune encephalomyelitis. Constitutively expressed by macrophages, B and T-lymphocytes at various developmental stages.

The protein localises to the cytoplasm. It localises to the nucleus. It is found in the lysosome. Functionally, acts as a negative regulator of innate and adaptive immunity by maintaining immune homeostasis. Plays a regulatory role in the Toll-like signaling pathway by determining the strength of LPS-induced signaling and gene expression. Inhibits TCR-mediated T-cell activation and negatively regulate T-cell function to prevent hyperresponsiveness. Also inhibits autolysosome formation via negatively modulating MTOR activation by interacting with RAC1 and promoting the disassociation of the RAC1-MTOR complex. Plays an essential role in NK-cell biology by acting as a checkpoint and displaying an expression pattern correlating with NK-cell maturation process and by negatively regulating NK-cell maturation and antitumor immunity. Mechanistically, suppresses IL-15-triggered mTOR activity in NK-cells. The sequence is that of Tumor necrosis factor alpha-induced protein 8-like protein 2 (Tnfaip8l2) from Mus musculus (Mouse).